Here is a 1428-residue protein sequence, read N- to C-terminus: Gag-Pol polyprotein (1428 aa).

G2 is lipidated: N-myristoyl glycine; by host. The interval 7-31 is interaction with Gp41; that stretch reads VLSGKKLDSWEKIRLRPGGNKKYRL. Residues 8–43 are interaction with host CALM1; sequence LSGKKLDSWEKIRLRPGGNKKYRLKHLVWASRELEK. The interaction with host AP3D1 stretch occupies residues 12–19; it reads KLDSWEKI. The segment at 14-33 is interaction with membrane phosphatidylinositol 4,5-bisphosphate and RNA; the sequence is DSWEKIRLRPGGNKKYRLKH. The short motif at 16-22 is the Nuclear export signal element; it reads WEKIRLR. The Nuclear localization signal motif lies at 26 to 32; sequence NKKYRLK. The tract at residues 73-77 is interaction with membrane phosphatidylinositol 4,5-bisphosphate; sequence EELRS. The segment at 108–130 is disordered; that stretch reads QNKNKQRTQQAAANTGSSQNYPI. The segment covering 114–130 has biased composition (polar residues); the sequence is RTQQAAANTGSSQNYPI. Position 128 is a phosphotyrosine; by host (Y128). An interaction with human PPIA/CYPA and NUP153 region spans residues 185 to 223; that stretch reads NVVGGHQAAMQMLKDTINEEAAEWDRLHPVHAGPIPPGQ. Residues 273-359 are dimerization/Multimerization of capsid protein p24; it reads YSPVSILDIR…GGPGHKARVL (87 aa). 2 CCHC-type zinc fingers span residues 384 to 401 and 405 to 422; these read IKCFNCGKEGHLAKNCRA and KGCWKCGKEGHQMKDCTE. The segment at 438–475 is disordered; sequence EAREFSSEQTRANSPTSRNLWDGGKDDLPCETGAERQG. Positions 444–456 are enriched in polar residues; the sequence is SEQTRANSPTSRN. Over residues 460–475 the composition is skewed to basic and acidic residues; the sequence is GGKDDLPCETGAERQG. Residues 482–486 form a dimerization of protease region; the sequence is PQITL. Residues 501–570 form the Peptidase A2 domain; it reads IEALLDTGAD…TPVNIIGRNM (70 aa). D506 serves as the catalytic For protease activity; shared with dimeric partner. Dimerization of protease stretches follow at residues 530–536 and 569–581; these read GIGGFIK and NMLTQIGCTLNFP. Residues 624–814 form the Reverse transcriptase domain; the sequence is EGKISKIGPE…PPFLWMGYEL (191 aa). D690, D765, and D766 together coordinate Mg(2+). The RT 'primer grip' stretch occupies residues 807–815; that stretch reads FLWMGYELH. The Tryptophan repeat motif signature appears at 978–994; sequence WEAWWMEYWQATWIPEW. The RNase H type-1 domain maps to 1014-1137; that stretch reads IAGAETFYVD…VDKLVSSGIR (124 aa). Mg(2+)-binding residues include D1023, E1058, D1078, and D1129. The segment at 1143-1184 adopts an Integrase-type zinc-finger fold; that stretch reads DGIDKAQEDHEKYHCNWRAMASDFNLPPVVAKEIVASCNKCQ. The Zn(2+) site is built by H1152, H1156, C1180, and C1183. The region spanning 1194–1344 is the Integrase catalytic domain; it reads VDCSPGIWQL…SAGERIIDII (151 aa). Mg(2+) contacts are provided by D1204, D1256, and E1292. Residues 1363 to 1410 constitute a DNA-binding region (integrase-type); that stretch reads FRVYYRDSRDPIWKGPAKLLWKGEGAVVIQDNSDIKVVPRRKAKIIRD.

As to quaternary structure, homotrimer; further assembles as hexamers of trimers. Interacts with gp41 (via C-terminus). Interacts with host CALM1; this interaction induces a conformational change in the Matrix protein, triggering exposure of the myristate group. Interacts with host AP3D1; this interaction allows the polyprotein trafficking to multivesicular bodies during virus assembly. Part of the pre-integration complex (PIC) which is composed of viral genome, matrix protein, Vpr and integrase. In terms of assembly, homodimer; the homodimer further multimerizes as homohexamers or homopentamers. Interacts with human PPIA/CYPA; This interaction stabilizes the capsid. Interacts with human NUP153. Interacts with host PDZD8; this interaction stabilizes the capsid. Interacts with monkey TRIM5; this interaction destabilizes the capsid. Homodimer, whose active site consists of two apposed aspartic acid residues. As to quaternary structure, heterodimer of p66 RT and p51 RT (RT p66/p51). Heterodimerization of RT is essential for DNA polymerase activity. The overall folding of the subdomains is similar in p66 RT and p51 RT but the spatial arrangements of the subdomains are dramatically different. In terms of assembly, homotetramer; may further associate as a homohexadecamer. Part of the pre-integration complex (PIC) which is composed of viral genome, matrix protein, Vpr and integrase. Interacts with human SMARCB1/INI1 and human PSIP1/LEDGF isoform 1. Interacts with human KPNA3; this interaction might play a role in nuclear import of the pre-integration complex. Interacts with human NUP153; this interaction might play a role in nuclear import of the pre-integration complex. The cofactor is Mg(2+). Post-translationally, specific enzymatic cleavages by the viral protease yield mature proteins. The protease is released by autocatalytic cleavage. The polyprotein is cleaved during and after budding, this process is termed maturation. Proteolytic cleavage of p66 RT removes the RNase H domain to yield the p51 RT subunit. Nucleocapsid protein p7 might be further cleaved after virus entry. Tyrosine phosphorylated presumably in the virion by a host kinase. Phosphorylation is apparently not a major regulator of membrane association. In terms of processing, phosphorylated possibly by host MAPK1; this phosphorylation is necessary for Pin1-mediated virion uncoating. Post-translationally, methylated by host PRMT6, impairing its function by reducing RNA annealing and the initiation of reverse transcription.

The protein resides in the host cell membrane. Its subcellular location is the host endosome. It is found in the host multivesicular body. The protein localises to the virion membrane. It localises to the host nucleus. The protein resides in the host cytoplasm. Its subcellular location is the virion. The catalysed reaction is Specific for a P1 residue that is hydrophobic, and P1' variable, but often Pro.. It carries out the reaction Endohydrolysis of RNA in RNA/DNA hybrids. Three different cleavage modes: 1. sequence-specific internal cleavage of RNA. Human immunodeficiency virus type 1 and Moloney murine leukemia virus enzymes prefer to cleave the RNA strand one nucleotide away from the RNA-DNA junction. 2. RNA 5'-end directed cleavage 13-19 nucleotides from the RNA end. 3. DNA 3'-end directed cleavage 15-20 nucleotides away from the primer terminus.. The enzyme catalyses 3'-end directed exonucleolytic cleavage of viral RNA-DNA hybrid.. It catalyses the reaction DNA(n) + a 2'-deoxyribonucleoside 5'-triphosphate = DNA(n+1) + diphosphate. With respect to regulation, protease: The viral protease is inhibited by many synthetic protease inhibitors (PIs), such as amprenavir, atazanavir, indinavir, loprinavir, nelfinavir, ritonavir and saquinavir. Use of protease inhibitors in tritherapy regimens permit more ambitious therapeutic strategies. Reverse transcriptase/ribonuclease H: RT can be inhibited either by nucleoside RT inhibitors (NRTIs) or by non nucleoside RT inhibitors (NNRTIs). NRTIs act as chain terminators, whereas NNRTIs inhibit DNA polymerization by binding a small hydrophobic pocket near the RT active site and inducing an allosteric change in this region. Classical NRTIs are abacavir, adefovir (PMEA), didanosine (ddI), lamivudine (3TC), stavudine (d4T), tenofovir (PMPA), zalcitabine (ddC), and zidovudine (AZT). Classical NNRTIs are atevirdine (BHAP U-87201E), delavirdine, efavirenz (DMP-266), emivirine (I-EBU), and nevirapine (BI-RG-587). The tritherapies used as a basic effective treatment of AIDS associate two NRTIs and one NNRTI. Functionally, mediates, with Gag polyprotein, the essential events in virion assembly, including binding the plasma membrane, making the protein-protein interactions necessary to create spherical particles, recruiting the viral Env proteins, and packaging the genomic RNA via direct interactions with the RNA packaging sequence (Psi). Gag-Pol polyprotein may regulate its own translation, by the binding genomic RNA in the 5'-UTR. At low concentration, the polyprotein would promote translation, whereas at high concentration, the polyprotein would encapsidate genomic RNA and then shut off translation. In terms of biological role, targets the polyprotein to the plasma membrane via a multipartite membrane-binding signal, that includes its myristoylated N-terminus. Matrix protein is part of the pre-integration complex. Implicated in the release from host cell mediated by Vpu. Binds to RNA. Its function is as follows. Forms the conical core that encapsulates the genomic RNA-nucleocapsid complex in the virion. Most core are conical, with only 7% tubular. The core is constituted by capsid protein hexamer subunits. The core is disassembled soon after virion entry. Host restriction factors such as TRIM5-alpha or TRIMCyp bind retroviral capsids and cause premature capsid disassembly, leading to blocks in reverse transcription. Capsid restriction by TRIM5 is one of the factors which restricts HIV-1 to the human species. Host PIN1 apparently facilitates the virion uncoating. On the other hand, interactions with PDZD8 or CYPA stabilize the capsid. Encapsulates and protects viral dimeric unspliced genomic RNA (gRNA). Binds these RNAs through its zinc fingers. Acts as a nucleic acid chaperone which is involved in rearangement of nucleic acid secondary structure during gRNA retrotranscription. Also facilitates template switch leading to recombination. As part of the polyprotein, participates in gRNA dimerization, packaging, tRNA incorporation and virion assembly. Functionally, aspartyl protease that mediates proteolytic cleavages of Gag and Gag-Pol polyproteins during or shortly after the release of the virion from the plasma membrane. Cleavages take place as an ordered, step-wise cascade to yield mature proteins. This process is called maturation. Displays maximal activity during the budding process just prior to particle release from the cell. Also cleaves Nef and Vif, probably concomitantly with viral structural proteins on maturation of virus particles. Hydrolyzes host EIF4GI and PABP1 in order to shut off the capped cellular mRNA translation. The resulting inhibition of cellular protein synthesis serves to ensure maximal viral gene expression and to evade host immune response. Also mediates cleavage of host YTHDF3. Mediates cleavage of host CARD8, thereby activating the CARD8 inflammasome, leading to the clearance of latent HIV-1 in patient CD4(+) T-cells after viral reactivation; in contrast, HIV-1 can evade CARD8-sensing when its protease remains inactive in infected cells prior to viral budding. In terms of biological role, multifunctional enzyme that converts the viral RNA genome into dsDNA in the cytoplasm, shortly after virus entry into the cell. This enzyme displays a DNA polymerase activity that can copy either DNA or RNA templates, and a ribonuclease H (RNase H) activity that cleaves the RNA strand of RNA-DNA heteroduplexes in a partially processive 3' to 5' endonucleasic mode. Conversion of viral genomic RNA into dsDNA requires many steps. A tRNA(3)-Lys binds to the primer-binding site (PBS) situated at the 5'-end of the viral RNA. RT uses the 3' end of the tRNA primer to perform a short round of RNA-dependent minus-strand DNA synthesis. The reading proceeds through the U5 region and ends after the repeated (R) region which is present at both ends of viral RNA. The portion of the RNA-DNA heteroduplex is digested by the RNase H, resulting in a ssDNA product attached to the tRNA primer. This ssDNA/tRNA hybridizes with the identical R region situated at the 3' end of viral RNA. This template exchange, known as minus-strand DNA strong stop transfer, can be either intra- or intermolecular. RT uses the 3' end of this newly synthesized short ssDNA to perform the RNA-dependent minus-strand DNA synthesis of the whole template. RNase H digests the RNA template except for two polypurine tracts (PPTs) situated at the 5'-end and near the center of the genome. It is not clear if both polymerase and RNase H activities are simultaneous. RNase H probably can proceed both in a polymerase-dependent (RNA cut into small fragments by the same RT performing DNA synthesis) and a polymerase-independent mode (cleavage of remaining RNA fragments by free RTs). Secondly, RT performs DNA-directed plus-strand DNA synthesis using the PPTs that have not been removed by RNase H as primers. PPTs and tRNA primers are then removed by RNase H. The 3' and 5' ssDNA PBS regions hybridize to form a circular dsDNA intermediate. Strand displacement synthesis by RT to the PBS and PPT ends produces a blunt ended, linear dsDNA copy of the viral genome that includes long terminal repeats (LTRs) at both ends. Its function is as follows. Catalyzes viral DNA integration into the host chromosome, by performing a series of DNA cutting and joining reactions. This enzyme activity takes place after virion entry into a cell and reverse transcription of the RNA genome in dsDNA. The first step in the integration process is 3' processing. This step requires a complex comprising the viral genome, matrix protein, Vpr and integrase. This complex is called the pre-integration complex (PIC). The integrase protein removes 2 nucleotides from each 3' end of the viral DNA, leaving recessed CA OH's at the 3' ends. In the second step, the PIC enters cell nucleus. This process is mediated through integrase and Vpr proteins, and allows the virus to infect a non dividing cell. This ability to enter the nucleus is specific of lentiviruses, other retroviruses cannot and rely on cell division to access cell chromosomes. In the third step, termed strand transfer, the integrase protein joins the previously processed 3' ends to the 5' ends of strands of target cellular DNA at the site of integration. The 5'-ends are produced by integrase-catalyzed staggered cuts, 5 bp apart. A Y-shaped, gapped, recombination intermediate results, with the 5'-ends of the viral DNA strands and the 3' ends of target DNA strands remaining unjoined, flanking a gap of 5 bp. The last step is viral DNA integration into host chromosome. This involves host DNA repair synthesis in which the 5 bp gaps between the unjoined strands are filled in and then ligated. Since this process occurs at both cuts flanking the HIV genome, a 5 bp duplication of host DNA is produced at the ends of HIV-1 integration. Alternatively, Integrase may catalyze the excision of viral DNA just after strand transfer, this is termed disintegration. This Human immunodeficiency virus type 1 group M subtype A (isolate U455) (HIV-1) protein is Gag-Pol polyprotein (gag-pol).